Here is a 542-residue protein sequence, read N- to C-terminus: Probable myosin-binding protein 6 (542 aa).

An N-terminal signal peptide occupies residues 1-21 (MYIQLLCFFLFLFLLLQATMS). The chain crosses the membrane as a helical span at residues 39–59 (FLIYTVLEWSLIVFLFIDGVI). Positions 219 to 239 (SFLAPAPSPRVSHNKLSENES) are disordered. The 99-residue stretch at 300–398 (SILNQLKKEV…ELEAEFEVYR (99 aa)) folds into the GTD-binding domain. The disordered stretch occupies residues 419–480 (GNASAYDDCQ…DEEKGSESKE (62 aa)). Polar residues predominate over residues 437 to 456 (AVSSSNQQENGENIDQNGQS). Residues 471–480 (DEEKGSESKE) show a composition bias toward basic and acidic residues.

It is found in the membrane. Probable membrane-anchored myosin receptors. The sequence is that of Probable myosin-binding protein 6 from Arabidopsis thaliana (Mouse-ear cress).